The chain runs to 540 residues: Chaperonin GroEL (540 aa).

ATP is bound by residues threonine 29–proline 32, aspartate 86–threonine 90, glycine 413, aspartate 477–leucine 479, and aspartate 493.

The protein belongs to the chaperonin (HSP60) family. In terms of assembly, forms a cylinder of 14 subunits composed of two heptameric rings stacked back-to-back. Interacts with the co-chaperonin GroES.

The protein resides in the cytoplasm. The catalysed reaction is ATP + H2O + a folded polypeptide = ADP + phosphate + an unfolded polypeptide.. Its function is as follows. Together with its co-chaperonin GroES, plays an essential role in assisting protein folding. The GroEL-GroES system forms a nano-cage that allows encapsulation of the non-native substrate proteins and provides a physical environment optimized to promote and accelerate protein folding. The protein is Chaperonin GroEL of Clostridium botulinum (strain Eklund 17B / Type B).